A 5207-amino-acid polypeptide reads, in one-letter code: E3 ubiquitin-protein ligase RNF213 (5207 aa).

2 disordered regions span residues 1–20 (MECPSCQHVSKEETPKFCSQ) and 27–365 (PAAP…EADV). A compositionally biased stretch (polar residues) spans 34 to 43 (SENNNSTMAS). The segment covering 89–100 (KKKKRKKKKKGN) has biased composition (basic residues). Composition is skewed to low complexity over residues 101–117 (KSASSELASLPLSPASP) and 136–157 (SQAQQSGPTGQPSQPPGTATTP). Positions 188–197 (SEAQSSPQFQ) are enriched in polar residues. Phosphoserine occurs at positions 208 and 217. Residues 248–266 (GGSSEPGTELQTTEQQAGA) are compositionally biased toward polar residues. Composition is skewed to basic and acidic residues over residues 285–294 (AGKEMKEKTQ), 309–346 (HCQEAETKTKDEMAAAEEKVGKNEQGEPEDLKKPEGKN), and 353–362 (KNEKEQKNQE). Residues 343-374 (EGKNRSAAAVKNEKEQKNQEADVQEVKASTLS) adopt a coiled-coil conformation. A Glycyl lysine isopeptide (Lys-Gly) (interchain with G-Cter in SUMO2) cross-link involves residue K1151. Position 1258 is a phosphoserine (S1258). Residues 1995 to 2000 (GVGKSL), E2098, D2155, and R2216 contribute to the ATP site. S2273 carries the phosphoserine modification. Positions 2499 and 2574 each coordinate ATP. Zn(2+) contacts are provided by C3997, C4000, C4012, H4014, C4017, C4020, C4032, C4035, C4505, and H4509. An RING-type zinc finger spans residues 3997–4036 (CSICLGDAKDPVCLPCDHVHCLRCLRAWFASEQMICPYCL). The segment at 4483–4555 (MPEDLLAQAR…VKDKADRTQT (73 aa)) adopts an RZ-type zinc-finger fold. C4516 functions as the Nucleophile; for E3 ubiquitin-lipopolysaccharide ligase activity in the catalytic mechanism. Zn(2+) contacts are provided by C4525 and C4528.

Belongs to the AAA ATPase family. As to quaternary structure, monomer. Interacts with UBE2L3/UBCH7; UBE2L3/UBCH7 is the most efficient ubiquitin-conjugating enzyme E2 for the ubiquitin ligase activity. Interacts with UBE2N/UBC13; promoting 'Lys-63'-linked ubiquitination of target proteins. In terms of assembly, (Microbial infection) Interacts with M.tuberculosis protein Rv3655c, which impairs caspase-8 activation and suppresses macrophage apoptosis by blocking the extrinsic pathway. Autoubiquitinated. Widely expressed (at protein level). As to expression, major isoform detected in all tissues examined. In terms of tissue distribution, minor isoform with restricted expression.

It is found in the cytoplasm. The protein localises to the cytosol. Its subcellular location is the lipid droplet. The catalysed reaction is S-ubiquitinyl-[E2 ubiquitin-conjugating enzyme]-L-cysteine + [acceptor protein]-L-lysine = [E2 ubiquitin-conjugating enzyme]-L-cysteine + N(6)-ubiquitinyl-[acceptor protein]-L-lysine.. It carries out the reaction ATP + H2O = ADP + phosphate + H(+). It functions in the pathway protein modification; protein ubiquitination. Functionally, atypical E3 ubiquitin ligase that can catalyze ubiquitination of both proteins and lipids, and which is involved in various processes, such as lipid metabolism, angiogenesis and cell-autonomous immunity. Acts as a key immune sensor by catalyzing ubiquitination of the lipid A moiety of bacterial lipopolysaccharide (LPS) via its RZ-type zinc-finger: restricts the proliferation of cytosolic bacteria, such as Salmonella, by generating the bacterial ubiquitin coat through the ubiquitination of LPS. Also acts indirectly by mediating the recruitment of the LUBAC complex, which conjugates linear polyubiquitin chains. Ubiquitination of LPS triggers cell-autonomous immunity, such as antibacterial autophagy, leading to degradation of the microbial invader. Involved in lipid metabolism by regulating fat storage and lipid droplet formation; act by inhibiting the lipolytic process. Also regulates lipotoxicity by inhibiting desaturation of fatty acids. Also acts as an E3 ubiquitin-protein ligase via its RING-type zinc finger: mediates 'Lys-63'-linked ubiquitination of target proteins. Involved in the non-canonical Wnt signaling pathway in vascular development: acts by mediating ubiquitination and degradation of FLNA and NFATC2 downstream of RSPO3, leading to inhibit the non-canonical Wnt signaling pathway and promoting vessel regression. Also has ATPase activity; ATPase activity is required for ubiquitination of LPS. The sequence is that of E3 ubiquitin-protein ligase RNF213 from Homo sapiens (Human).